Here is a 123-residue protein sequence, read N- to C-terminus: Large ribosomal subunit protein bL12 (123 aa).

Belongs to the bacterial ribosomal protein bL12 family. As to quaternary structure, homodimer. Part of the ribosomal stalk of the 50S ribosomal subunit. Forms a multimeric L10(L12)X complex, where L10 forms an elongated spine to which 2 to 4 L12 dimers bind in a sequential fashion. Binds GTP-bound translation factors.

Functionally, forms part of the ribosomal stalk which helps the ribosome interact with GTP-bound translation factors. Is thus essential for accurate translation. This Shewanella sp. (strain MR-4) protein is Large ribosomal subunit protein bL12.